The following is a 346-amino-acid chain: Protein Rae1 (346 aa).

4 WD repeats span residues 17 to 61 (ASPP…ATVP), 64 to 105 (MKTM…VMQV), 126 to 148 (LMTG…PMMT), and 255 to 289 (VNDI…KLKS).

The protein belongs to the WD repeat rae1 family. Interacts with hiw; the interaction with Rae1 may protect hiw from autophagy-mediated degradation. Interacts with Nup98-96. In terms of tissue distribution, head (at protein level).

The protein resides in the cytoplasm. Its subcellular location is the perinuclear region. It is found in the nucleus. The protein localises to the nucleus envelope. It localises to the chromosome. In terms of biological role, probable component of the nuclear pore complex (NPC) which regulates the nuclear export of specific mRNAs and promotes cell cycle progression during mitosis and male meiosis. Acts with Nup98-96 to promote the nuclear export of specific mRNAs such as Moe, however it does not appear to be required for general nuclear mRNA transport. Essential mitotic and male meiotic cell cycle regulator with roles in many aspects of the cell cycle including chromatin organization and condensation, spindle assembly, chromosome segregation, and maintaining nuclear structure. During male meiosis it is required for completion of meiosis I, as well as accurate cytokinesis of the secondary spermatocytes, and postmeiotic differentiation of spermatids. Acts as a downstream regulatory target of the Hippo/SWH (Sav/Wts/Hpo) signaling pathway to promote mitotic cell cycle progression and proliferation during wing and eye development, and thereby plays a key role in integrating the regulation of proliferation with organ size control. When the Hippo/SWH signaling pathway is inactive, Rae1 acts independently of yki to increase organ size by promoting mitotic S-phase entry and increase cellular proliferation. When the Hippo/SWH signaling pathway is active it inhibits the activity of Rae1 in a Wts-dependent manner to restrict organ growth. However, Rae1 is also able to negatively regulate the levels and activity of yki likely by activating the core kinases of the Hippo/SWH signaling pathway hpo and Wts and increasing the protein levels of hpo, Mer and Wts; it is therefore likely that it functions as part of a negative feedback loop with the Hippo/SWH signaling pathway to regulate pathway homeostasis and prevent organ overgrowth. Promotes mitotic cell cycle progression, at least in part, by increasing the accumulation of mitotic cyclins such as CycB, possibly by directly up-regulating cyclin transcripts or by inhibiting the anaphase promoting complex/cyclosome (APC/C) activator fzy. Also required in presynaptic, postmitotic motor neurons to restrain synaptic terminal growth. Promotes the expression and stability of the an E3 ubiquitin ligase of hiw, and is likely to function in the regulation of synaptic growth by binding to hiw and protecting it from autophagy-mediated degradation. The protein is Protein Rae1 of Drosophila melanogaster (Fruit fly).